Reading from the N-terminus, the 1121-residue chain is Potassium channel subfamily U member 1 (1121 aa).

The Extracellular portion of the chain corresponds to 1 to 24 (MSQTLLDSLNQKELTETSCTIEIQ). Residues 25-45 (AAFILSSLATFFGGLIILFLF) form a helical membrane-spanning segment. Residues 46 to 101 (RIALKSSRSWKYVKGPRGLLELFSSRRIEANPLRKLYFHGVFRQRIEMLLSAQTVV) are Cytoplasmic-facing. Residues 102 to 122 (GQVLVILVFVLSIGSLVIYFI) form a helical membrane-spanning segment. Residues 123–137 (NSMDPVRRCSSYEDK) lie on the Extracellular side of the membrane. Residues 138-158 (IVHVDLSFNAFFSFYFGLRFW) traverse the membrane as a helical segment. Residues 159–165 (AAEDKIK) are Cytoplasmic-facing. Residues 166-186 (FWLEMNSIVDIFTIPPTFISY) form a helical membrane-spanning segment. Topologically, residues 187–188 (YL) are extracellular. The chain crosses the membrane as a helical; Voltage-sensor span at residues 189–209 (KSNWLGLRFLRALRLLELPKI). The Cytoplasmic portion of the chain corresponds to 210–226 (LQILQVIKTSNSVKLSK). Residues 227 to 247 (LLSIVISTWFTAAGFLHLVEN) form a helical membrane-spanning segment. Residues 248-259 (SGDPWLNGRNSQ) lie on the Extracellular side of the membrane. Positions 260–282 (TMSYFESIYLVTATMSTVGFGDV) form an intramembrane region, pore-forming. The Selectivity for potassium motif lies at 276 to 279 (TVGF). Residues 283–290 (VAKTSLGR) lie on the Extracellular side of the membrane. The chain crosses the membrane as a helical span at residues 291–311 (IFIVFFTLGSLILFANYIPEM). At 312-1121 (VELFSTRKKY…LDASDIVQEK (810 aa)) the chain is on the cytoplasmic side. 2 RCK N-terminal domains span residues 331 to 473 (KKFI…DNIL) and 718 to 889 (QNHI…DGML). Disordered stretches follow at residues 836 to 858 (SPTP…KERK) and 1052 to 1076 (DSSP…GSNF).

This sequence belongs to the potassium channel family. Calcium-activated (TC 1.A.1.3) subfamily. KCa5.1/KCNU1 sub-subfamily. As to quaternary structure, homotetramer; which constitutes the calcium-activated potassium channel. Interact with LRRC52; this interaction changes some channel gating properties, such as shifting gating to more negative potentials at a given pH. As to expression, testis-specific. Mainly expressed in spermatocytes. Expressed in testis, brain, eye and kidney.

It localises to the cell membrane. It is found in the cytoplasm. It catalyses the reaction K(+)(in) = K(+)(out). With respect to regulation, regulated by changes in cytosolic pH; activated by alkalization. In contrast to human KCNU1 is not activated by Ca(2+) or Mg(2+). The auxiliary subunit LRRC52 shifts the activation of KCNU1 to more negative potentials at a given pH. Its function is as follows. Testis-specific potassium channel activated by both intracellular pH and membrane voltage that mediates export of K(+). Represents the primary spermatozoan K(+) current. The channel underlies a pH-triggered membrane hyperpolarization during the process of sperm capacitation, as sperm encounter the alkaline environment near the ovum in the female reproductive tract, thereby playing an essential for male fertility. The polypeptide is Potassium channel subfamily U member 1 (Kcnu1) (Mus musculus (Mouse)).